The chain runs to 793 residues: Phosphoribosylformylglycinamidine synthase subunit PurL (793 aa).

Histidine 53 is a catalytic residue. Residues tyrosine 56 and lysine 95 each coordinate ATP. Glutamate 97 lines the Mg(2+) pocket. Substrate is bound by residues 98 to 101 (SHNH) and arginine 120. Histidine 99 serves as the catalytic Proton acceptor. Mg(2+) is bound at residue aspartate 121. Glutamine 244 is a substrate binding site. Mg(2+) is bound at residue aspartate 272. Residue 316 to 318 (ESQ) coordinates substrate. The ATP site is built by aspartate 523 and glycine 560. Mg(2+) is bound at residue asparagine 561. Serine 563 lines the substrate pocket.

Belongs to the FGAMS family. Monomer. Part of the FGAM synthase complex composed of 1 PurL, 1 PurQ and 2 PurS subunits.

The protein localises to the cytoplasm. The catalysed reaction is N(2)-formyl-N(1)-(5-phospho-beta-D-ribosyl)glycinamide + L-glutamine + ATP + H2O = 2-formamido-N(1)-(5-O-phospho-beta-D-ribosyl)acetamidine + L-glutamate + ADP + phosphate + H(+). It participates in purine metabolism; IMP biosynthesis via de novo pathway; 5-amino-1-(5-phospho-D-ribosyl)imidazole from N(2)-formyl-N(1)-(5-phospho-D-ribosyl)glycinamide: step 1/2. Functionally, part of the phosphoribosylformylglycinamidine synthase complex involved in the purines biosynthetic pathway. Catalyzes the ATP-dependent conversion of formylglycinamide ribonucleotide (FGAR) and glutamine to yield formylglycinamidine ribonucleotide (FGAM) and glutamate. The FGAM synthase complex is composed of three subunits. PurQ produces an ammonia molecule by converting glutamine to glutamate. PurL transfers the ammonia molecule to FGAR to form FGAM in an ATP-dependent manner. PurS interacts with PurQ and PurL and is thought to assist in the transfer of the ammonia molecule from PurQ to PurL. The chain is Phosphoribosylformylglycinamidine synthase subunit PurL from Prochlorococcus marinus (strain SARG / CCMP1375 / SS120).